The primary structure comprises 120 residues: Large ribosomal subunit protein uL18 (120 aa).

It belongs to the universal ribosomal protein uL18 family. In terms of assembly, part of the 50S ribosomal subunit; part of the 5S rRNA/L5/L18/L25 subcomplex. Contacts the 5S and 23S rRNAs.

In terms of biological role, this is one of the proteins that bind and probably mediate the attachment of the 5S RNA into the large ribosomal subunit, where it forms part of the central protuberance. In Brevibacillus brevis (strain 47 / JCM 6285 / NBRC 100599), this protein is Large ribosomal subunit protein uL18.